The primary structure comprises 267 residues: MYADRDLPGAGGLAVRVIPCLDVDDGRVVKGVNFENLRDAGDPVELAAVYDAEGADELTFLDVTASSSGRATMLEVVRRTAEQVFIPLTVGGGVRTVADVDSLLRAGADKVAVNTAAIACPDLLADMARQFGSQCIVLSVDARTVPVGSAPTPSGWEVTTHGGRRGTGMDAVQWAARGADLGVGEILLNSMDADGTKAGFDLALLRAVRAAVTVPVIASGGAGAVEHFAPAVAAGADAVLAASVFHFRELTIGQVKAALAAEGITVR.

Residues aspartate 22 and aspartate 141 contribute to the active site.

It belongs to the HisA/HisF family. Heterodimer of HisH and HisF.

It localises to the cytoplasm. The catalysed reaction is 5-[(5-phospho-1-deoxy-D-ribulos-1-ylimino)methylamino]-1-(5-phospho-beta-D-ribosyl)imidazole-4-carboxamide + L-glutamine = D-erythro-1-(imidazol-4-yl)glycerol 3-phosphate + 5-amino-1-(5-phospho-beta-D-ribosyl)imidazole-4-carboxamide + L-glutamate + H(+). Its pathway is amino-acid biosynthesis; L-histidine biosynthesis; L-histidine from 5-phospho-alpha-D-ribose 1-diphosphate: step 5/9. Functionally, IGPS catalyzes the conversion of PRFAR and glutamine to IGP, AICAR and glutamate. The HisF subunit catalyzes the cyclization activity that produces IGP and AICAR from PRFAR using the ammonia provided by the HisH subunit. This Mycobacterium tuberculosis (strain ATCC 25177 / H37Ra) protein is Imidazole glycerol phosphate synthase subunit HisF.